Here is a 386-residue protein sequence, read N- to C-terminus: Histidine decarboxylase (386 aa).

A substrate-binding site is contributed by His-120. Lys-233 is subject to N6-(pyridoxal phosphate)lysine.

The protein belongs to the group II decarboxylase family. As to quaternary structure, homotetramer. Requires pyridoxal 5'-phosphate as cofactor.

It catalyses the reaction L-histidine + H(+) = histamine + CO2. This is Histidine decarboxylase from Vibrio campbellii (strain ATCC BAA-1116).